We begin with the raw amino-acid sequence, 233 residues long: MAKLTKRMRTIRAKVDVTKEYDINEAVALLKELATAKFVESVDVAVNLGIDARKSDQNVRGATVLPHGTGRDIRVAVFTQGANAEAAKAAGAELVGMEDLADLVKKGEMNFDVVIASPDAMRVVGQLGTILGPRGLMPNPKVGTVTPNVAEAVKNAKAGQVRYRNDKNGIIHTTIGKVTFEADQLKENLEALLVALKKAKPSSAKGVFVKKVSISTTMGAGVAVDQNTLSAQV.

The protein belongs to the universal ribosomal protein uL1 family. As to quaternary structure, part of the 50S ribosomal subunit.

Its function is as follows. Binds directly to 23S rRNA. The L1 stalk is quite mobile in the ribosome, and is involved in E site tRNA release. In terms of biological role, protein L1 is also a translational repressor protein, it controls the translation of the L11 operon by binding to its mRNA. This is Large ribosomal subunit protein uL1 from Vibrio cholerae serotype O1 (strain ATCC 39315 / El Tor Inaba N16961).